Consider the following 340-residue polypeptide: Glycerol-3-phosphate dehydrogenase [NAD(P)+] (340 aa).

Ser-14, Phe-15, Arg-35, and Lys-108 together coordinate NADPH. Lys-108 and Gly-136 together coordinate sn-glycerol 3-phosphate. Residue Ala-140 participates in NADPH binding. Residues Lys-191, Asp-244, Ser-254, Arg-255, and Asn-256 each contribute to the sn-glycerol 3-phosphate site. Lys-191 (proton acceptor) is an active-site residue. Arg-255 lines the NADPH pocket. Positions 279 and 281 each coordinate NADPH.

This sequence belongs to the NAD-dependent glycerol-3-phosphate dehydrogenase family.

Its subcellular location is the cytoplasm. The enzyme catalyses sn-glycerol 3-phosphate + NAD(+) = dihydroxyacetone phosphate + NADH + H(+). The catalysed reaction is sn-glycerol 3-phosphate + NADP(+) = dihydroxyacetone phosphate + NADPH + H(+). The protein operates within membrane lipid metabolism; glycerophospholipid metabolism. In terms of biological role, catalyzes the reduction of the glycolytic intermediate dihydroxyacetone phosphate (DHAP) to sn-glycerol 3-phosphate (G3P), the key precursor for phospholipid synthesis. This chain is Glycerol-3-phosphate dehydrogenase [NAD(P)+], found in Ectopseudomonas mendocina (strain ymp) (Pseudomonas mendocina).